Reading from the N-terminus, the 535-residue chain is Probable anion transporter 2, chloroplastic (535 aa).

A chloroplast-targeting transit peptide spans 1 to 95 (MASIRSCVSV…RERAVAAMCS (95 aa)). The next 12 membrane-spanning stretches (helical) occupy residues 125–145 (VVAL…VMSV), 160–180 (FLGI…MVGG), 191–211 (VMAG…WAAS), 215–235 (IMLL…FPTM), 254–274 (ISMG…PIIM), 279–299 (LAGT…VWLF), 343–363 (IEMW…FVLL), 381–401 (AAWF…VAGA), 413–433 (VALV…VSLL), 443–463 (VAAV…AGYF), 483–503 (GIGT…VQWL), and 504–524 (GSFQ…TVFY).

Belongs to the major facilitator superfamily. Sodium/anion cotransporter (TC 2.A.1.14) family.

It localises to the plastid. It is found in the chloroplast membrane. Its function is as follows. Probable anion transporter. This Oryza sativa subsp. japonica (Rice) protein is Probable anion transporter 2, chloroplastic (PHT4;2).